A 60-amino-acid polypeptide reads, in one-letter code: Large ribosomal subunit protein bL32 (60 aa).

Residues 1 to 60 (MAVQQNKKTPSKRGMHRSHDFLVAPQLSVEPTTGETHMRHHISPNGFYRGRKVLKTKNDE) form a disordered region. Basic residues predominate over residues 49–60 (RGRKVLKTKNDE).

The protein belongs to the bacterial ribosomal protein bL32 family.

The protein is Large ribosomal subunit protein bL32 of Janthinobacterium sp. (strain Marseille) (Minibacterium massiliensis).